Reading from the N-terminus, the 119-residue chain is Large ribosomal subunit protein uL18 (119 aa).

It belongs to the universal ribosomal protein uL18 family. In terms of assembly, part of the 50S ribosomal subunit; part of the 5S rRNA/L5/L18/L25 subcomplex. Contacts the 5S and 23S rRNAs.

Functionally, this is one of the proteins that bind and probably mediate the attachment of the 5S RNA into the large ribosomal subunit, where it forms part of the central protuberance. The chain is Large ribosomal subunit protein uL18 from Clostridium tetani (strain Massachusetts / E88).